The following is a 1461-amino-acid chain: Calmodulin-regulated spectrin-associated protein 2 (1461 aa).

Residues 211–324 (PGGQKARYRK…FMAELFWWFE (114 aa)) form the Calponin-homology (CH) domain. A disordered region spans residues 361–389 (RDSSSSSDFSSRYTRPQTHSSASGGIRRS). 2 stretches are compositionally biased toward low complexity: residues 362 to 371 (DSSSSSDFSS) and 380 to 389 (SSASGGIRRS). Phosphoserine is present on residues serine 391 and serine 393. Threonine 401 carries the post-translational modification Phosphothreonine. Phosphoserine is present on residues serine 439, serine 572, serine 573, serine 585, and serine 647. 2 disordered regions span residues 573–613 (SPDN…EDSS) and 639–704 (ASNP…GSEL). Position 652 is a phosphothreonine (threonine 652). Serine 654 carries the phosphoserine modification. The segment covering 654–673 (STKSQPGSSASSSSGVKMTS) has biased composition (low complexity). Residues 677–687 (QKFRKLNHTDG) show a composition bias toward basic and acidic residues. The stretch at 730–767 (LLASEMVHLRMRLEEKRRAIEAQKKKMEAAFTKQRQKM) forms a coiled coil. A compositionally biased stretch (basic and acidic residues) spans 787–826 (REEAAGAEDEKVYTDRAKERESQKMDGQRSKSLADIKESM). The disordered stretch occupies residues 787–855 (REEAAGAEDE…QWNLTSPSEE (69 aa)). At serine 836 the chain carries Phosphoserine. A coiled-coil region spans residues 861–900 (EILEYTKSIEKLNSSLHFLQQEMQRLSLQQEMLMQMREQQ). An MBD region region spans residues 896–1007 (MREQQAWVIS…IQTRSFVCFG (112 aa)). Residues serine 905 and serine 910 each carry the phosphoserine modification. Disordered regions lie at residues 921–992 (RQAG…RRFS), 1004–1044 (VCFG…GEKE), 1069–1090 (NEDQ…PTAP), 1102–1124 (DLKP…DKEQ), and 1163–1321 (KETQ…EYTG). Positions 926–937 (SSAAAPFSSDSP) are enriched in low complexity. Residues 943 to 962 (SPQSSTRKSASFSVKNQRTP) are compositionally biased toward polar residues. A phosphothreonine mark is found at threonine 970, threonine 975, and threonine 977. Serine 981 and serine 992 each carry phosphoserine. Positions 1011–1028 (EPQKEPKQKEEIKKEPSE) are enriched in basic and acidic residues. Over residues 1077–1089 (TEPPPKPVFPPTA) the composition is skewed to pro residues. Basic and acidic residues-rich tracts occupy residues 1104 to 1124 (KPPE…DKEQ) and 1163 to 1224 (KETQ…DTVI). Serine 1120 carries the post-translational modification Phosphoserine. A coiled-coil region spans residues 1138-1210 (KDDQKAENDM…REFIRQEYMR (73 aa)). The span at 1259-1271 (SSLSLASLNTGDS) shows a compositional bias: polar residues. 3 positions are modified to phosphoserine: serine 1285, serine 1291, and serine 1293. Polar residues predominate over residues 1306 to 1318 (NASTTSSVASGTE). Positions 1321 to 1455 (GPKLYKEPSA…QTKRPVTPKK (135 aa)) constitute a CKK domain.

This sequence belongs to the CAMSAP1 family. As to quaternary structure, interacts with CAMSAP3. Interacts with KATNA1 and KATNB1; leading to regulate the length of CAMSAP2-decorated microtubule stretches. Interacts with a complex formed by AKAP9 and PDE4DIP isoform 2/MMG8/SMYLE, which recruits CAMSAP2 to the Golgi. Interacts with MAPRE1/EB1.

It localises to the cytoplasm. The protein localises to the cytoskeleton. It is found in the golgi apparatus. Its subcellular location is the cilium basal body. Key microtubule-organizing protein that specifically binds the minus-end of non-centrosomal microtubules and regulates their dynamics and organization. Specifically recognizes growing microtubule minus-ends and autonomously decorates and stabilizes microtubule lattice formed by microtubule minus-end polymerization. Acts on free microtubule minus-ends that are not capped by microtubule-nucleating proteins or other factors and protects microtubule minus-ends from depolymerization. In addition, it also reduces the velocity of microtubule polymerization. Through the microtubule cytoskeleton, also regulates the organization of cellular organelles including the Golgi and the early endosomes. Essential for the tethering, but not for nucleation of non-centrosomal microtubules at the Golgi: together with Golgi-associated proteins AKAP9 and PDE4DIP, required to tether non-centrosomal minus-end microtubules to the Golgi, an important step for polarized cell movement. Also acts as a regulator of neuronal polarity and development: localizes to non-centrosomal microtubule minus-ends in neurons and stabilizes non-centrosomal microtubules, which is required for neuronal polarity, axon specification and dendritic branch formation. Through the microtubule cytoskeleton, regulates the autophagosome transport. The chain is Calmodulin-regulated spectrin-associated protein 2 from Mus musculus (Mouse).